Here is a 236-residue protein sequence, read N- to C-terminus: 2,3,4,5-tetrahydropyridine-2,6-dicarboxylate N-acetyltransferase (236 aa).

The protein belongs to the transferase hexapeptide repeat family. DapH subfamily.

The catalysed reaction is (S)-2,3,4,5-tetrahydrodipicolinate + acetyl-CoA + H2O = L-2-acetamido-6-oxoheptanedioate + CoA. The protein operates within amino-acid biosynthesis; L-lysine biosynthesis via DAP pathway; LL-2,6-diaminopimelate from (S)-tetrahydrodipicolinate (acetylase route): step 1/3. Functionally, catalyzes the transfer of an acetyl group from acetyl-CoA to tetrahydrodipicolinate. The chain is 2,3,4,5-tetrahydropyridine-2,6-dicarboxylate N-acetyltransferase from Geobacillus sp. (strain WCH70).